The primary structure comprises 582 residues: Protein NUCLEAR FUSION DEFECTIVE 4 (582 aa).

Residues Met1–Asp20 form a disordered region. A run of 8 helical transmembrane segments spans residues Val46–Tyr66, Ile100–Val120, Ile132–Cys152, Leu172–Phe192, Leu202–Val222, Val243–Ser263, Leu270–Tyr290, and Leu358–Ser378. N-linked (GlcNAc...) asparagine glycosylation is present at Asn391. 5 consecutive transmembrane segments (helical) span residues Leu395–Ala412, Thr425–Ser445, Leu458–Phe478, Ile489–Tyr509, and Thr536–Ile556.

It localises to the membrane. Required for karyogamy during female gametophyte development, when the two polar nuclei fuse to form the diploid central cell nucleus. The protein is Protein NUCLEAR FUSION DEFECTIVE 4 of Arabidopsis thaliana (Mouse-ear cress).